The sequence spans 476 residues: Sedoheptulokinase (476 aa).

This sequence belongs to the FGGY kinase family.

The protein resides in the cytoplasm. The enzyme catalyses sedoheptulose + ATP = D-sedoheptulose 7-phosphate + ADP + H(+). Acts as a modulator of macrophage activation through control of glucose metabolism. The polypeptide is Sedoheptulokinase (Shpk) (Mus musculus (Mouse)).